A 433-amino-acid polypeptide reads, in one-letter code: Adenylosuccinate synthetase (433 aa).

Residues 11 to 17 (GDEGKGK) and 39 to 41 (GHT) each bind GTP. Catalysis depends on D12, which acts as the Proton acceptor. Mg(2+) is bound by residues D12 and G39. Residues 12–15 (DEGK), 37–40 (NAGH), T134, R148, N230, T245, and R309 contribute to the IMP site. H40 functions as the Proton donor in the catalytic mechanism. 305 to 311 (VTTGRKR) is a substrate binding site. GTP is bound by residues R311, 337–339 (KLD), and 419–421 (GTG).

It belongs to the adenylosuccinate synthetase family. Homodimer. Requires Mg(2+) as cofactor.

It localises to the cytoplasm. The enzyme catalyses IMP + L-aspartate + GTP = N(6)-(1,2-dicarboxyethyl)-AMP + GDP + phosphate + 2 H(+). It functions in the pathway purine metabolism; AMP biosynthesis via de novo pathway; AMP from IMP: step 1/2. Plays an important role in the de novo pathway and in the salvage pathway of purine nucleotide biosynthesis. Catalyzes the first committed step in the biosynthesis of AMP from IMP. This is Adenylosuccinate synthetase from Eremothecium gossypii (strain ATCC 10895 / CBS 109.51 / FGSC 9923 / NRRL Y-1056) (Yeast).